A 449-amino-acid polypeptide reads, in one-letter code: UDP-N-acetylmuramoylalanine--D-glutamate ligase (449 aa).

113–119 contributes to the ATP binding site; sequence GTNGKTT.

Belongs to the MurCDEF family.

It is found in the cytoplasm. The catalysed reaction is UDP-N-acetyl-alpha-D-muramoyl-L-alanine + D-glutamate + ATP = UDP-N-acetyl-alpha-D-muramoyl-L-alanyl-D-glutamate + ADP + phosphate + H(+). The protein operates within cell wall biogenesis; peptidoglycan biosynthesis. Cell wall formation. Catalyzes the addition of glutamate to the nucleotide precursor UDP-N-acetylmuramoyl-L-alanine (UMA). This is UDP-N-acetylmuramoylalanine--D-glutamate ligase from Gloeothece citriformis (strain PCC 7424) (Cyanothece sp. (strain PCC 7424)).